Consider the following 485-residue polypeptide: Metalloprotease AprA (485 aa).

Histidine 187 is a binding site for Zn(2+). Glutamate 188 is a catalytic residue. Zn(2+)-binding residues include histidine 191 and histidine 197. Ca(2+) contacts are provided by arginine 268, glycine 270, threonine 272, aspartate 300, glycine 302, glycine 303, aspartate 305, threonine 342, glutamate 344, glycine 349, glycine 351, aspartate 353, asparagine 358, leucine 360, asparagine 362, glycine 366, glycine 367, alanine 368, glycine 369, aspartate 371, glycine 375, glycine 376, glycine 377, glycine 378, aspartate 380, glycine 384, glycine 385, threonine 386, glycine 387, aspartate 389, aspartate 398, aspartate 405, aspartate 415, aspartate 461, threonine 463, asparagine 465, serine 467, and aspartate 469. 3 Hemolysin-type calcium-binding repeats span residues 347 to 364 (FGGSGNDLLIGNALANVL), 365 to 382 (KGGAGNDIIYGGGGADQL), and 383 to 395 (WGGTGADTFVFGA).

Belongs to the peptidase M10B family. Requires Ca(2+) as cofactor. Zn(2+) serves as cofactor.

It is found in the secreted. Functionally, secreted protease which is important for P.entomophila to counteract the local immune response of Drosophila. Can degrade antimicrobial peptides (AMPs), e.g. Diptericin and Cecropin A. Thus, protects P.entomophila from the Drosophila antimicrobial peptides produced by the gut innate immune response, and promotes bacterial persistence in the Drosophila gut and killing of the host. Is responsible for maturation of pro-Monalysin to the active toxin Monalysin, by cleaving its N-terminus. The sequence is that of Metalloprotease AprA from Pseudomonas entomophila (strain L48).